The primary structure comprises 214 residues: Cytochrome b (214 aa).

4 consecutive transmembrane segments (helical) span residues Phe31–Ile51, Trp75–Ile96, Trp111–Leu131, and Phe176–Leu196. 2 residues coordinate heme b: His81 and His95. His180 and His194 together coordinate heme b. Position 199 (His199) interacts with a ubiquinone.

The protein belongs to the cytochrome b family. The cytochrome bc1 complex contains 3 respiratory subunits (MT-CYB, CYC1 and UQCRFS1), 2 core proteins (UQCRC1 and UQCRC2) and probably 6 low-molecular weight proteins. Requires heme b as cofactor.

The protein resides in the mitochondrion inner membrane. In terms of biological role, component of the ubiquinol-cytochrome c reductase complex (complex III or cytochrome b-c1 complex) that is part of the mitochondrial respiratory chain. The b-c1 complex mediates electron transfer from ubiquinol to cytochrome c. Contributes to the generation of a proton gradient across the mitochondrial membrane that is then used for ATP synthesis. In Bothrops bilineatus (Green jararaca), this protein is Cytochrome b (MT-CYB).